Reading from the N-terminus, the 973-residue chain is GATOR2 complex protein WDR59 (973 aa).

WD repeat units lie at residues 57-98 (QSKW…GEVC), 103-143 (GHTR…KPTV), 146-185 (SAVAGASQVKWNKKNANCLATSHDGDVRIWDKRKPSTAVE), 189-229 (AHLS…KYLN), 232-276 (PCQV…TPVH), and 280-324 (GHDD…QRLC). A disordered region spans residues 346 to 365 (DKALQPQDSEPQHSSGHGDE). The span at 351–360 (PQDSEPQHSS) shows a compositional bias: polar residues. One can recognise an RWD domain in the interval 393–494 (QEFSLINVQI…RQLVSWLESV (102 aa)). The C4-type zinc finger occupies 900-920 (YCSHCRSEARGTQCAICKGFT). Residues C901, C904, C913, C916, C926, C937, H942, H945, H948, C959, C963, C965, and C967 each coordinate Zn(2+). The segment at 921 to 970 (FQCAICHVAVRGSSNFCLTCGHGGHTSHMMEWFRTQEVCPTGCGCHCLLE) adopts an RING-type; atypical zinc-finger fold.

Belongs to the WD repeat WDR59 family. As to quaternary structure, component of the GATOR2 subcomplex, composed of MIOS, SEC13, SEH1L, WDR24 and WDR59. The GATOR2 complex interacts with CASTOR1 and CASTOR2; the interaction is negatively regulated by arginine. The GATOR2 complex interacts with SESN1, SESN2 and SESN3; the interaction is negatively regulated by amino acids. Interacts with DDB1-CUL4A/B E3 ligase complexes.

The protein resides in the lysosome membrane. Its activity is regulated as follows. The GATOR2 complex is negatively regulated by the upstream amino acid sensors CASTOR1 and SESN2, which sequester the GATOR2 complex in absence of amino acids. In the presence of abundant amino acids, GATOR2 is released from CASTOR1 and SESN2 and activated. Functionally, as a component of the GATOR2 complex, functions as an activator of the amino acid-sensing branch of the mTORC1 signaling pathway. The GATOR2 complex indirectly activates mTORC1 through the inhibition of the GATOR1 subcomplex. GATOR2 probably acts as an E3 ubiquitin-protein ligase toward GATOR1. In the presence of abundant amino acids, the GATOR2 complex mediates ubiquitination of the NPRL2 core component of the GATOR1 complex, leading to GATOR1 inactivation. In the absence of amino acids, GATOR2 is inhibited, activating the GATOR1 complex. The sequence is that of GATOR2 complex protein WDR59 from Gallus gallus (Chicken).